The chain runs to 479 residues: D-aminoacyl-tRNA deacylase (479 aa).

This sequence belongs to the DtdA deacylase family. As to quaternary structure, monomer. The cofactor is Zn(2+).

It catalyses the reaction a D-aminoacyl-tRNA + H2O = a tRNA + a D-alpha-amino acid + H(+). The enzyme catalyses glycyl-tRNA(Ala) + H2O = tRNA(Ala) + glycine + H(+). Its function is as follows. D-aminoacyl-tRNA deacylase with broad substrate specificity. By recycling D-aminoacyl-tRNA to D-amino acids and free tRNA molecules, this enzyme counteracts the toxicity associated with the formation of D-aminoacyl-tRNA entities in vivo. The protein is D-aminoacyl-tRNA deacylase of Methanococcoides burtonii (strain DSM 6242 / NBRC 107633 / OCM 468 / ACE-M).